The primary structure comprises 225 residues: Cytidylate kinase (225 aa).

11 to 19 (GPAAAGKST) contacts ATP.

It belongs to the cytidylate kinase family. Type 1 subfamily.

Its subcellular location is the cytoplasm. The catalysed reaction is CMP + ATP = CDP + ADP. It catalyses the reaction dCMP + ATP = dCDP + ADP. The protein is Cytidylate kinase of Bacillus cereus (strain AH187).